A 238-amino-acid chain; its full sequence is MRPNHRENNQIRPVKITRHYTRYAEGSVLIEFGETKVLCNASIEESVPRFLKGQQQGWVTAEYGMLPRATHSRNQREAAKGKQSGRTMEIQRLIARALRAVVDLEALGERTITIDCDVIQADGGTRTAAITGACVALQDAIHKLIADGVLKTNPLKGLVAAISVGIVENEAVCDLEYVEDAKAETDMNVVMVEDGRLVEVQGTAEGKPFSHMELLQLLDLADQGINQLFEVQRQALAE.

Phosphate contacts are provided by residues R86 and 124–126 (GTR).

Belongs to the RNase PH family. Homohexameric ring arranged as a trimer of dimers.

The catalysed reaction is tRNA(n+1) + phosphate = tRNA(n) + a ribonucleoside 5'-diphosphate. Its function is as follows. Phosphorolytic 3'-5' exoribonuclease that plays an important role in tRNA 3'-end maturation. Removes nucleotide residues following the 3'-CCA terminus of tRNAs; can also add nucleotides to the ends of RNA molecules by using nucleoside diphosphates as substrates, but this may not be physiologically important. Probably plays a role in initiation of 16S rRNA degradation (leading to ribosome degradation) during starvation. This Haemophilus ducreyi (strain 35000HP / ATCC 700724) protein is Ribonuclease PH.